Consider the following 233-residue polypeptide: 2-C-methyl-D-erythritol 4-phosphate cytidylyltransferase (233 aa).

The protein belongs to the IspD/TarI cytidylyltransferase family. IspD subfamily.

The enzyme catalyses 2-C-methyl-D-erythritol 4-phosphate + CTP + H(+) = 4-CDP-2-C-methyl-D-erythritol + diphosphate. It participates in isoprenoid biosynthesis; isopentenyl diphosphate biosynthesis via DXP pathway; isopentenyl diphosphate from 1-deoxy-D-xylulose 5-phosphate: step 2/6. Its function is as follows. Catalyzes the formation of 4-diphosphocytidyl-2-C-methyl-D-erythritol from CTP and 2-C-methyl-D-erythritol 4-phosphate (MEP). The protein is 2-C-methyl-D-erythritol 4-phosphate cytidylyltransferase of Thiobacillus denitrificans (strain ATCC 25259 / T1).